Consider the following 364-residue polypeptide: DNA polymerase IV (364 aa).

In terms of domain architecture, UmuC spans 7-187 (IIHVDMDAFY…LPVNRVPGVG (181 aa)). Aspartate 11 and aspartate 105 together coordinate Mg(2+). Residue glutamate 106 is part of the active site.

This sequence belongs to the DNA polymerase type-Y family. As to quaternary structure, monomer. Mg(2+) is required as a cofactor.

The protein localises to the cytoplasm. It carries out the reaction DNA(n) + a 2'-deoxyribonucleoside 5'-triphosphate = DNA(n+1) + diphosphate. Poorly processive, error-prone DNA polymerase involved in untargeted mutagenesis. Copies undamaged DNA at stalled replication forks, which arise in vivo from mismatched or misaligned primer ends. These misaligned primers can be extended by PolIV. Exhibits no 3'-5' exonuclease (proofreading) activity. May be involved in translesional synthesis, in conjunction with the beta clamp from PolIII. The polypeptide is DNA polymerase IV (Stenotrophomonas maltophilia (strain K279a)).